Reading from the N-terminus, the 689-residue chain is Glycine--tRNA ligase beta subunit (689 aa).

It belongs to the class-II aminoacyl-tRNA synthetase family. In terms of assembly, tetramer of two alpha and two beta subunits.

Its subcellular location is the cytoplasm. It catalyses the reaction tRNA(Gly) + glycine + ATP = glycyl-tRNA(Gly) + AMP + diphosphate. In Salmonella paratyphi A (strain ATCC 9150 / SARB42), this protein is Glycine--tRNA ligase beta subunit.